A 426-amino-acid polypeptide reads, in one-letter code: MAIEESPTYAEPGPYEALSRFSSLTREDHRKWWEHTGPVLEKVLKDSGYELQSQYTYLYFVQQHLVPYLGTFPTRGEDEHRWQSNLTPYKVPYELSWNISNKVVRISWDPVCDASGTEADAFNKKAIHDCTRQIAQLSNTIVLDRYRILHQELVISDQEEQELLRRDDLPKSGRGQHNLAVDFQNGGIALKVYFYPYMKFLATGSPVEQLFFAAIEKIGTADIQEPVKMLRCFLSPSFDDGKPSVDQKVFPSLLACDLCDPSKSRIKYYVIDKWVKWERIASLWTIGGRRLEDPSCAKGLALLKELWDLLAIPEGDRGDIWPNLVLGQPPTHLMTTMANYTLSPASRFPEPQVYLTTFGMNDMAIMDALTAFYERAGLTDMAKSYKKNVQSYYPNLDLSQTNWVHEAISFSYRNSKPYLSVYYSPF.

Residue E94 coordinates substrate. Residues R105, K191, and Y193 each contribute to the dimethylallyl diphosphate site. Residue Y195 participates in substrate binding. Dimethylallyl diphosphate is bound by residues K267, Y269, Q352, Y354, Y418, and Y422.

Belongs to the tryptophan dimethylallyltransferase family.

It catalyses the reaction 6-hydroxydeoxybrevianamide E + dimethylallyl diphosphate = notoamide S + diphosphate. The protein operates within alkaloid biosynthesis. Prenyltransferase; part of the gene cluster that mediates the biosynthesis of notoamide, a fungal indole alkaloid that belongs to a family of natural products containing a characteristic bicyclo[2.2.2]diazaoctane core. The first step of notoamide biosynthesis involves coupling of L-proline and L-tryptophan by the bimodular NRPS notE', to produce cyclo-L-tryptophan-L-proline called brevianamide F. The reverse prenyltransferase notF' then acts as a deoxybrevianamide E synthase and converts brevianamide F to deoxybrevianamide E via reverse prenylation at C-2 of the indole ring leading to the bicyclo[2.2.2]diazaoctane core. Deoxybrevianamide E is further hydroxylated at C-6 of the indole ring, likely catalyzed by the cytochrome P450 monooxygenase notG', to yield 6-hydroxy-deoxybrevianamide E. 6-hydroxy-deoxybrevianamide E is a specific substrate of the prenyltransferase notC' for normal prenylation at C-7 to produce 6-hydroxy-7-prenyl-deoxybrevianamide, also called notoamide S. As the proposed pivotal branching point in notoamide biosynthesis, notoamide S can be diverted to notoamide E through an oxidative pyran ring closure putatively catalyzed by either notH' cytochrome P450 monooxygenase or the notD' FAD-linked oxidoreductase. This step would be followed by an indole 2,3-epoxidation-initiated pinacol-like rearrangement catalyzed by the notB' FAD-dependent monooxygenase leading to the formation of notoamide C and notoamide D. On the other hand notoamide S is converted to notoamide T by notH' (or notD'), a bifunctional oxidase that also functions as the intramolecular Diels-Alderase responsible for generation of (-)-notoamide T. To generate antipodal (+)-notoaminide T, notH (or notD) in Aspergillus strain MF297-2 is expected to catalyze a Diels-Alder reaction leading to the opposite stereochemistry. The remaining oxidoreductase notD' (or notH') likely catalyzes the oxidative pyran ring formation to yield (-)-stephacidin A. The FAD-dependent monooxygenase notI' is highly similar to notB' and is predicted to catalyze a similar conversion from (-)-stephacidin A to (+)-notoamide B via the 2,3-epoxidation of (-)-stephacidin A followed by a pinacol-type rearrangement. Finally, it remains unclear which enzyme could be responsible for the final hydroxylation steps leading to notoamide A and sclerotiamide. The chain is 6-Hydroxy-7-prenyldeoxybrevianamide E synthase notC' from Aspergillus versicolor.